A 554-amino-acid polypeptide reads, in one-letter code: Arginine--tRNA ligase (554 aa).

The short motif at 129-139 (ANPTGPLHIGH) is the 'HIGH' region element.

This sequence belongs to the class-I aminoacyl-tRNA synthetase family. As to quaternary structure, monomer.

Its subcellular location is the cytoplasm. The enzyme catalyses tRNA(Arg) + L-arginine + ATP = L-arginyl-tRNA(Arg) + AMP + diphosphate. The protein is Arginine--tRNA ligase of Geobacter sp. (strain M21).